Consider the following 266-residue polypeptide: MKGVAWILSVGNELLIGRVVNTNAAWLASKLTFLGYSVRRIVVVPDEENDIVEAFREAINRADVVILTGGLGPTPDDITNLAFCKALGVEAVVNDEALKMVRGKYESRGYALTPERIKMAMMPPGATPLPNPVGTAPGILYESGGKLVVLLPGVPKEMEAIFENHVEPLLKSRGPPVYFSEREVVVRGVPEADIAPVIREVMRLDKRVYVKSHPRGFEVNAPLLHIHIYASAGSKEEAEALVSKASDRLIELIKLKYGDRASISTG.

The protein belongs to the CinA family.

This is Protein PAE0875 from Pyrobaculum aerophilum (strain ATCC 51768 / DSM 7523 / JCM 9630 / CIP 104966 / NBRC 100827 / IM2).